Consider the following 414-residue polypeptide: MTMTKQSSLSPGSRLYDYTTQDGAAWRVSALKEVSYDVVVQPRLLDPANPALADALSSGTTPARRLIVIDATVRSLYGEQLAAYLAGHDVEFHLCVIDAHESAKVMETVFEVVDAMDAFGVPRRHAPVLAMGGGVLTDIVGLAASLYRRATPYVRIPTTLIGMIDAGIGAKTGVNFREHKNRLGTYHPSSLTLIDPGFLATLDARHLRNGLAEILKVALVKDAELFDLLEGHGASLVEQRMQPGEGGTGGAALTVLRRAVQGMLEELQPNLWEHQLRRLVDFGHSFSPSVEMAALPELLHGEAVCIDMALSSVLAHHRGLLTEAELGRVLDVMRLLHLPVLHPVCTPDLMRAALADTVKHRDGWQHMPLPRGIGDAVFVNDVTQREIEAALLTLAERDRVPRWRALHGAVDMGV.

Residues Asp-70, 101 to 104 (ESAK), 134 to 138 (GVLTD), 158 to 159 (TT), Lys-171, Lys-180, and 198 to 201 (FLAT) each bind NAD(+). Residue Lys-171 is part of the active site. Residues Glu-213, His-284, and His-300 each contribute to the Zn(2+) site.

This sequence belongs to the sugar phosphate cyclases superfamily. EEVS family. Requires NAD(+) as cofactor. Zn(2+) is required as a cofactor.

It catalyses the reaction D-sedoheptulose 7-phosphate = 2-epi-5-epi-valiolone + phosphate. It participates in antibiotic biosynthesis. Functionally, catalyzes the cyclization of D-sedoheptulose 7-phosphate to 2-epi-5-epi-valiolone. Involved in validamycin biosynthesis. The chain is 2-epi-5-epi-valiolone synthase from Streptomyces hygroscopicus subsp. jinggangensis (strain 5008).